Here is a 509-residue protein sequence, read N- to C-terminus: Histidine ammonia-lyase (509 aa).

The segment at residues 142 to 144 (ASG) is a cross-link (5-imidazolinone (Ala-Gly)). Ser143 is modified (2,3-didehydroalanine (Ser)).

This sequence belongs to the PAL/histidase family. In terms of processing, contains an active site 4-methylidene-imidazol-5-one (MIO), which is formed autocatalytically by cyclization and dehydration of residues Ala-Ser-Gly.

The protein localises to the cytoplasm. The enzyme catalyses L-histidine = trans-urocanate + NH4(+). The protein operates within amino-acid degradation; L-histidine degradation into L-glutamate; N-formimidoyl-L-glutamate from L-histidine: step 1/3. The polypeptide is Histidine ammonia-lyase (Sphingopyxis alaskensis (strain DSM 13593 / LMG 18877 / RB2256) (Sphingomonas alaskensis)).